Consider the following 553-residue polypeptide: Zinc finger protein 324A (553 aa).

The KRAB domain occupies 1–72; sequence MAFEDVAVYF…SGTDTTLSRT (72 aa). Positions 130-135 match the Nuclear localization signal motif; sequence PSRERK. The segment at 186–221 is disordered; the sequence is GRQPRTPERQKPCAQEVPGRTFGSAQDLEAAGGRGH. 9 C2H2-type zinc fingers span residues 257–279, 285–307, 313–335, 341–363, 369–391, 397–419, 425–447, 453–475, and 481–503; these read FECRACSKVFVKSSDLLKHLRTH, YECAQCGKAFSQTSHLTQHQRIH, YACPVCGKAFRHSSSLVRHQRIH, FRCSECGKAFSHGSNLSQHRKIH, YACAQCGRRFCRNSHLIQHERTH, FVCALCGAAFSQGSSLFKHQRVH, FACPQCGRAFSHSSNLTQHQLLH, FRCVDCGKAFAKGAVLLSHRRIH, and FVCTQCGRAFRERPALFHHQRIH. Residues 502-553 are disordered; it reads IHTGEKTVRRSRASLHPQARSVAGASSEGAPAKETEPTPASGPAAVSQPAEV.

This sequence belongs to the krueppel C2H2-type zinc-finger protein family. Expressed at high levels in the spleen, thymus, and PBMC, at low levels in the prostate, ovary, small intestine, colon (mucosal lining), placenta, lung, and pancreas, and very weakly expressed in the liver and kidney.

Its subcellular location is the nucleus. Functionally, may be involved in transcriptional regulation. May be involved in regulation of cell proliferation. This is Zinc finger protein 324A (ZNF324) from Homo sapiens (Human).